Consider the following 549-residue polypeptide: Cation/acetate symporter ActP (549 aa).

The next 13 membrane-spanning stretches (helical) occupy residues Trp33–Ala53, Leu77–Phe97, Gly103–Glu123, Ile148–Gly168, Ile183–Ala203, Trp206–Val226, Ile262–Leu282, Gly303–Val323, Leu355–Leu375, Val404–Glu424, Ile428–Leu448, Gly464–Val484, and Ile493–Phe513.

This sequence belongs to the sodium:solute symporter (SSF) (TC 2.A.21) family.

The protein resides in the cell inner membrane. Transports acetate. This chain is Cation/acetate symporter ActP, found in Salmonella agona (strain SL483).